A 64-amino-acid chain; its full sequence is Large ribosomal subunit protein bL35 (64 aa).

Residues 1–55 (MPKMKTNKSVSARFKLTASGQLKRTRPGKRHKLSKKSSQEKRNLSKQPLVDKGQV) are disordered. Residues 23–35 (KRTRPGKRHKLSK) are compositionally biased toward basic residues.

Belongs to the bacterial ribosomal protein bL35 family.

This Chlamydia pneumoniae (Chlamydophila pneumoniae) protein is Large ribosomal subunit protein bL35.